The sequence spans 215 residues: L-fuculose phosphate aldolase (215 aa).

Residues 28 to 29 (GN), 43 to 44 (TG), and 71 to 72 (SS) each bind substrate. The active-site Proton donor/acceptor is the Glu73. Residues Glu73, His92, His94, and His155 each contribute to the Zn(2+) site.

This sequence belongs to the aldolase class II family. AraD/FucA subfamily. As to quaternary structure, homotetramer. It depends on Zn(2+) as a cofactor.

It carries out the reaction L-fuculose 1-phosphate = (S)-lactaldehyde + dihydroxyacetone phosphate. It functions in the pathway carbohydrate degradation; L-fucose degradation; L-lactaldehyde and glycerone phosphate from L-fucose: step 3/3. Functionally, involved in the degradation of L-fucose and D-arabinose. Catalyzes the reversible cleavage of L-fuculose 1-phosphate (Fuc1P) to yield dihydroxyacetone phosphate (DHAP) and L-lactaldehyde. The sequence is that of L-fuculose phosphate aldolase from Escherichia coli O6:H1 (strain CFT073 / ATCC 700928 / UPEC).